The chain runs to 66 residues: Conotoxin Bu1.4 (66 aa).

The first 23 residues, 1-23, serve as a signal peptide directing secretion; it reads MGMRMRMMFTVFLLVVLANTVVS. A propeptide spanning residues 24 to 46 is cleaved from the precursor; that stretch reads FPSDRDSDGADAEASDEPVEFER. The interval 25 to 48 is disordered; it reads PSDRDSDGADAEASDEPVEFERDE. Positions 32–42 are enriched in acidic residues; sequence GADAEASDEPV. Intrachain disulfides connect Cys51–Cys57 and Cys52–Cys62. Position 63 is a threonine amide (Thr63).

Belongs to the conotoxin A superfamily. In terms of tissue distribution, expressed by the venom duct.

The protein resides in the secreted. This is Conotoxin Bu1.4 from Conus bullatus (Bubble cone).